Reading from the N-terminus, the 185-residue chain is Elongation factor P (185 aa).

It belongs to the elongation factor P family.

Its subcellular location is the cytoplasm. It participates in protein biosynthesis; polypeptide chain elongation. Its function is as follows. Involved in peptide bond synthesis. Stimulates efficient translation and peptide-bond synthesis on native or reconstituted 70S ribosomes in vitro. Probably functions indirectly by altering the affinity of the ribosome for aminoacyl-tRNA, thus increasing their reactivity as acceptors for peptidyl transferase. This is Elongation factor P from Azoarcus sp. (strain BH72).